A 664-amino-acid chain; its full sequence is Kinesin-like protein KIF2B (664 aa).

Residue Thr-125 is modified to Phosphothreonine; by PLK1. Positions 149–177 form a coiled coil; the sequence is CLREIEKLQKQREKRRRLQLEIRARRALD. Ser-204 carries the post-translational modification Phosphoserine; by PLK1. Residues 213–543 enclose the Kinesin motor domain; that stretch reads RICVCVRKRP…LRYANRVKEL (331 aa). Residue 303-310 coordinates ATP; the sequence is GQTGSGKT. The interval 583 to 607 is disordered; it reads VQKEEEKESDELTSTKEPAASWSRS. Residues 642–663 are a coiled coil; the sequence is VLTEIQKKLQLLRDDLQKKSQA.

The protein belongs to the TRAFAC class myosin-kinesin ATPase superfamily. Kinesin family. MCAK/KIF2 subfamily. In terms of processing, phosphorylation at Thr-125 by PLK1 is required for activity in the correction of kinetochore-microtubules attachment errors, while phosphorylation at Ser-204 also by PLK1 is required for the kinetochore localization and activity in prometaphase.

The protein resides in the cytoplasm. It is found in the cytoskeleton. It localises to the microtubule organizing center. Its subcellular location is the centrosome. The protein localises to the spindle. The protein resides in the chromosome. It is found in the centromere. It localises to the kinetochore. Its function is as follows. Plus end-directed microtubule-dependent motor required for spindle assembly and chromosome movement. Has microtubule depolymerization activity. Plays a role in chromosome congression. This chain is Kinesin-like protein KIF2B, found in Rattus norvegicus (Rat).